The sequence spans 1955 residues: 227 kDa spindle- and centromere-associated protein (1955 aa).

Coiled coils occupy residues lysine 82–valine 129, glutamate 152–serine 317, valine 385–leucine 1747, and glutamate 1770–isoleucine 1813. 2 disordered regions span residues proline 1865–tyrosine 1896 and methionine 1912–glutamate 1955. The span at arginine 1878–tyrosine 1896 shows a compositional bias: polar residues. A compositionally biased stretch (basic residues) spans arginine 1938–glutamine 1948.

It localises to the cytoplasm. It is found in the cytoskeleton. Its subcellular location is the microtubule organizing center. The protein localises to the centrosome. The protein resides in the chromosome. It localises to the centromere. It is found in the kinetochore. Its subcellular location is the spindle. Functionally, may play a role in the organization of the spindle apparatus and its interaction with the centromeres. The sequence is that of 227 kDa spindle- and centromere-associated protein (PUMA1) from Parascaris univalens (Nematode worm).